The following is a 199-amino-acid chain: Chaperone protein TorD (199 aa).

The protein belongs to the TorD/DmsD family. TorD subfamily.

The protein localises to the cytoplasm. Its function is as follows. Involved in the biogenesis of TorA. Acts on TorA before the insertion of the molybdenum cofactor and, as a result, probably favors a conformation of the apoenzyme that is competent for acquiring the cofactor. This Escherichia coli O6:H1 (strain CFT073 / ATCC 700928 / UPEC) protein is Chaperone protein TorD.